Here is a 148-residue protein sequence, read N- to C-terminus: Large ribosomal subunit protein bL9 (148 aa).

Residues 46–65 (QLQQQNKHAEQEREQEIEDA) form a disordered region. The segment covering 52–65 (KHAEQEREQEIEDA) has biased composition (basic and acidic residues).

The protein belongs to the bacterial ribosomal protein bL9 family.

Functionally, binds to the 23S rRNA. This Staphylococcus carnosus (strain TM300) protein is Large ribosomal subunit protein bL9.